The chain runs to 103 residues: Acylphosphatase-2 (103 aa).

The Acylphosphatase-like domain occupies 13-103 (SVDYEVFGRV…LQYNGFSTRY (91 aa)). Catalysis depends on residues Arg28 and Asn46.

The protein belongs to the acylphosphatase family.

The catalysed reaction is an acyl phosphate + H2O = a carboxylate + phosphate + H(+). The chain is Acylphosphatase-2 (acyp2) from Xenopus tropicalis (Western clawed frog).